The sequence spans 121 residues: Large ribosomal subunit protein uL24 (121 aa).

It belongs to the universal ribosomal protein uL24 family. As to quaternary structure, part of the 50S ribosomal subunit.

Its function is as follows. One of two assembly initiator proteins, it binds directly to the 5'-end of the 23S rRNA, where it nucleates assembly of the 50S subunit. In terms of biological role, located at the polypeptide exit tunnel on the outside of the subunit. The polypeptide is Large ribosomal subunit protein uL24 (Thermococcus kodakarensis (strain ATCC BAA-918 / JCM 12380 / KOD1) (Pyrococcus kodakaraensis (strain KOD1))).